A 304-amino-acid polypeptide reads, in one-letter code: Glycine--tRNA ligase alpha subunit (304 aa).

The protein belongs to the class-II aminoacyl-tRNA synthetase family. In terms of assembly, tetramer of two alpha and two beta subunits.

The protein localises to the cytoplasm. It catalyses the reaction tRNA(Gly) + glycine + ATP = glycyl-tRNA(Gly) + AMP + diphosphate. The protein is Glycine--tRNA ligase alpha subunit of Actinobacillus pleuropneumoniae serotype 3 (strain JL03).